The chain runs to 150 residues: uncharacterized protein (150 aa).

This is an uncharacterized protein from Escherichia coli O157:H7.